The following is a 182-amino-acid chain: Large ribosomal subunit protein bL25 (182 aa).

It belongs to the bacterial ribosomal protein bL25 family. CTC subfamily. In terms of assembly, part of the 50S ribosomal subunit; part of the 5S rRNA/L5/L18/L25 subcomplex. Contacts the 5S rRNA. Binds to the 5S rRNA independently of L5 and L18.

Its function is as follows. This is one of the proteins that binds to the 5S RNA in the ribosome where it forms part of the central protuberance. This chain is Large ribosomal subunit protein bL25, found in Borreliella burgdorferi (strain ZS7) (Borrelia burgdorferi).